Here is a 275-residue protein sequence, read N- to C-terminus: Alpha carbonic anhydrase 7 (275 aa).

The signal sequence occupies residues 1–27 (MVNYSSISCIFFVALFSIFTIVSISSA). Residues N3 and N96 are each glycosylated (N-linked (GlcNAc...) asparagine). Residues 38-272 (REFNYKKNDE…TNKRIVHLYR (235 aa)) enclose the Alpha-carbonic anhydrase domain. C63 and C222 are disulfide-bonded. H104 serves as the catalytic Proton acceptor. Zn(2+) is bound by residues H130, H132, and H149. 218–219 (TT) lines the substrate pocket. N-linked (GlcNAc...) asparagine glycosylation is present at N225.

The protein belongs to the alpha-class carbonic anhydrase family. It depends on Zn(2+) as a cofactor. In terms of processing, N-glycosylated.

It localises to the plastid. The protein localises to the chloroplast stroma. The enzyme catalyses hydrogencarbonate + H(+) = CO2 + H2O. In terms of biological role, reversible hydration of carbon dioxide. This Arabidopsis thaliana (Mouse-ear cress) protein is Alpha carbonic anhydrase 7 (ACA7).